The chain runs to 329 residues: Quinate dehydrogenase (329 aa).

It carries out the reaction L-quinate + NAD(+) = 3-dehydroquinate + NADH + H(+). It functions in the pathway aromatic compound metabolism; 3,4-dihydroxybenzoate biosynthesis; 3-dehydroquinate from D-quinate (NAD(+) route): step 1/1. This chain is Quinate dehydrogenase (qutB), found in Emericella nidulans (strain FGSC A4 / ATCC 38163 / CBS 112.46 / NRRL 194 / M139) (Aspergillus nidulans).